A 471-amino-acid chain; its full sequence is Ribulose bisphosphate carboxylase large chain 2 (471 aa).

Residues Asn116 and Thr166 each coordinate substrate. Lys168 functions as the Proton acceptor in the catalytic mechanism. Lys170 is a substrate binding site. 3 residues coordinate Mg(2+): Lys194, Asp196, and Glu197. Residue Lys194 is modified to N6-carboxylysine. Catalysis depends on His287, which acts as the Proton acceptor. Arg288, His320, and Ser372 together coordinate substrate.

The protein belongs to the RuBisCO large chain family. Type I subfamily. Heterohexadecamer of 8 large chains and 8 small chains; disulfide-linked. The disulfide link is formed within the large subunit homodimers. Mg(2+) serves as cofactor. In terms of processing, the disulfide bond which can form in the large chain dimeric partners within the hexadecamer appears to be associated with oxidative stress and protein turnover.

The catalysed reaction is 2 (2R)-3-phosphoglycerate + 2 H(+) = D-ribulose 1,5-bisphosphate + CO2 + H2O. It carries out the reaction D-ribulose 1,5-bisphosphate + O2 = 2-phosphoglycolate + (2R)-3-phosphoglycerate + 2 H(+). In terms of biological role, ruBisCO catalyzes two reactions: the carboxylation of D-ribulose 1,5-bisphosphate, the primary event in carbon dioxide fixation, as well as the oxidative fragmentation of the pentose substrate. Both reactions occur simultaneously and in competition at the same active site. This is Ribulose bisphosphate carboxylase large chain 2 from Allochromatium vinosum (strain ATCC 17899 / DSM 180 / NBRC 103801 / NCIMB 10441 / D) (Chromatium vinosum).